We begin with the raw amino-acid sequence, 207 residues long: Small ribosomal subunit protein uS10m (207 aa).

Residues Met-1–Ala-24 constitute a mitochondrion transit peptide.

It belongs to the universal ribosomal protein uS10 family. Part of the mitochondrial small ribosomal subunit.

It is found in the mitochondrion. Functionally, involved in mitochondrial genome encoded proteins translation. Involved in the binding of tRNA to the ribosomes. The chain is Small ribosomal subunit protein uS10m (RSM10) from Eremothecium gossypii (strain ATCC 10895 / CBS 109.51 / FGSC 9923 / NRRL Y-1056) (Yeast).